The sequence spans 902 residues: Phosphoenolpyruvate carboxylase (902 aa).

The active site involves histidine 132. Residues 327–346 are disordered; sequence DALERPEKTAGKKSSKRTPY. The active site involves lysine 561.

It belongs to the PEPCase type 1 family. Mg(2+) is required as a cofactor.

The enzyme catalyses oxaloacetate + phosphate = phosphoenolpyruvate + hydrogencarbonate. Forms oxaloacetate, a four-carbon dicarboxylic acid source for the tricarboxylic acid cycle. The sequence is that of Phosphoenolpyruvate carboxylase from Corynebacterium diphtheriae (strain ATCC 700971 / NCTC 13129 / Biotype gravis).